A 286-amino-acid polypeptide reads, in one-letter code: Bifunctional protein FolD 2 (286 aa).

NADP(+)-binding positions include 165–167 (GRG), threonine 192, and valine 233.

Belongs to the tetrahydrofolate dehydrogenase/cyclohydrolase family. As to quaternary structure, homodimer.

It carries out the reaction (6R)-5,10-methylene-5,6,7,8-tetrahydrofolate + NADP(+) = (6R)-5,10-methenyltetrahydrofolate + NADPH. It catalyses the reaction (6R)-5,10-methenyltetrahydrofolate + H2O = (6R)-10-formyltetrahydrofolate + H(+). The protein operates within one-carbon metabolism; tetrahydrofolate interconversion. In terms of biological role, catalyzes the oxidation of 5,10-methylenetetrahydrofolate to 5,10-methenyltetrahydrofolate and then the hydrolysis of 5,10-methenyltetrahydrofolate to 10-formyltetrahydrofolate. The sequence is that of Bifunctional protein FolD 2 from Rhodococcus jostii (strain RHA1).